The primary structure comprises 459 residues: Exodeoxyribonuclease 7 large subunit (459 aa).

It belongs to the XseA family. In terms of assembly, heterooligomer composed of large and small subunits.

It is found in the cytoplasm. The catalysed reaction is Exonucleolytic cleavage in either 5'- to 3'- or 3'- to 5'-direction to yield nucleoside 5'-phosphates.. In terms of biological role, bidirectionally degrades single-stranded DNA into large acid-insoluble oligonucleotides, which are then degraded further into small acid-soluble oligonucleotides. The polypeptide is Exodeoxyribonuclease 7 large subunit (Pseudomonas putida (strain ATCC 47054 / DSM 6125 / CFBP 8728 / NCIMB 11950 / KT2440)).